The sequence spans 180 residues: Cytidylate kinase (180 aa).

7-15 serves as a coordination point for ATP; that stretch reads GPPGSGTTT.

It belongs to the cytidylate kinase family. Type 2 subfamily.

It localises to the cytoplasm. It carries out the reaction CMP + ATP = CDP + ADP. The catalysed reaction is dCMP + ATP = dCDP + ADP. The sequence is that of Cytidylate kinase (cmk) from Archaeoglobus fulgidus (strain ATCC 49558 / DSM 4304 / JCM 9628 / NBRC 100126 / VC-16).